The sequence spans 134 residues: NADH-quinone oxidoreductase subunit A (134 aa).

3 consecutive transmembrane segments (helical) span residues 14–34, 66–86, and 96–116; these read FFMFIFFSLGLCFFMLCLSWI, FYLIAMFFVVFDVEALYLYAW, and IGFSEALMFGISLLLGLFYLV.

This sequence belongs to the complex I subunit 3 family. As to quaternary structure, NDH-1 is composed of 13 different subunits. Subunits NuoA, H, J, K, L, M, N constitute the membrane sector of the complex.

It localises to the cell membrane. It catalyses the reaction a quinone + NADH + 5 H(+)(in) = a quinol + NAD(+) + 4 H(+)(out). NDH-1 shuttles electrons from NADH, via FMN and iron-sulfur (Fe-S) centers, to quinones in the respiratory chain. The immediate electron acceptor for the enzyme in this species is believed to be ubiquinone. Couples the redox reaction to proton translocation (for every two electrons transferred, four hydrogen ions are translocated across the cytoplasmic membrane), and thus conserves the redox energy in a proton gradient. This chain is NADH-quinone oxidoreductase subunit A, found in Buchnera aphidicola subsp. Acyrthosiphon pisum (strain APS) (Acyrthosiphon pisum symbiotic bacterium).